We begin with the raw amino-acid sequence, 441 residues long: tRNA modification GTPase MnmE (441 aa).

R22, E80, and K118 together coordinate (6S)-5-formyl-5,6,7,8-tetrahydrofolate. The TrmE-type G domain occupies 213–366 (GIYIAIVGEP…LLNLIKQRVE (154 aa)). GTP contacts are provided by residues 223–228 (NSGKST), 242–248 (SEYAGTT), and 267–270 (DTAG). Positions 227 and 248 each coordinate Mg(2+). K441 is a binding site for (6S)-5-formyl-5,6,7,8-tetrahydrofolate.

The protein belongs to the TRAFAC class TrmE-Era-EngA-EngB-Septin-like GTPase superfamily. TrmE GTPase family. In terms of assembly, homodimer. Heterotetramer of two MnmE and two MnmG subunits. Requires K(+) as cofactor.

Its subcellular location is the cytoplasm. Exhibits a very high intrinsic GTPase hydrolysis rate. Involved in the addition of a carboxymethylaminomethyl (cmnm) group at the wobble position (U34) of certain tRNAs, forming tRNA-cmnm(5)s(2)U34. In Ehrlichia canis (strain Jake), this protein is tRNA modification GTPase MnmE.